The following is a 348-amino-acid chain: tRNA (cytosine(34)-C(5))-methyltransferase, mitochondrial (348 aa).

S-adenosyl-L-methionine is bound by residues 139 to 145, Glu162, Asp193, and Asp211; that span reads CAAPGGK. The Nucleophile role is filled by Cys265.

It belongs to the class I-like SAM-binding methyltransferase superfamily. RsmB/NOP family.

Its subcellular location is the mitochondrion matrix. The catalysed reaction is cytidine(34) in mitochondrial tRNA + S-adenosyl-L-methionine = 5-methylcytidine(34) in mitochondrial tRNA + S-adenosyl-L-homocysteine + H(+). Its function is as follows. Mitochondrial tRNA methyltransferase that mediates methylation of cytosine to 5-methylcytosine (m5C) at position 34 of mt-tRNA(Met). mt-tRNA(Met) methylation at cytosine(34) takes place at the wobble position of the anticodon and initiates the formation of 5-formylcytosine (f(5)c) at this position. mt-tRNA(Met) containing the f(5)c modification at the wobble position enables recognition of the AUA codon in addition to the AUG codon, expanding codon recognition in mitochondrial translation. This Mus musculus (Mouse) protein is tRNA (cytosine(34)-C(5))-methyltransferase, mitochondrial.